Consider the following 360-residue polypeptide: MSDLDTLLMETLAQVAFAADEGELENVRVGALGKKGTISALLATLGKMSPDERKVQGAAINALKDKVNEALAERRLILKEQKLEARLAAEIIDVTLPVLPRPEELGRIHPITQVMDELAAIFAEMGFAIAEGPDIETDDYNFTKLNFPPDHPARDMHDTFFFEPDAQGQRKVLRTHTSPVQVRTMLTQKPPIRVICPGRTYRCDSDQTHTPMFHQVEGLVIDKSAHLGHLKWILEEFCKAFFEVPDVKMRFRPSYFPFTEPSMEVDIQCSRKGGEIRFGEGEDWLEILGCGMVHPNVLRNCGLDPDVYQGFAWGMGIDRIAMLKYGMPDLRAFFEADIRWLNHYGFRPLDMPSLLSGLSS.

Glu-260 contacts Mg(2+).

The protein belongs to the class-II aminoacyl-tRNA synthetase family. Phe-tRNA synthetase alpha subunit type 1 subfamily. As to quaternary structure, tetramer of two alpha and two beta subunits. It depends on Mg(2+) as a cofactor.

The protein localises to the cytoplasm. It carries out the reaction tRNA(Phe) + L-phenylalanine + ATP = L-phenylalanyl-tRNA(Phe) + AMP + diphosphate + H(+). This chain is Phenylalanine--tRNA ligase alpha subunit, found in Beijerinckia indica subsp. indica (strain ATCC 9039 / DSM 1715 / NCIMB 8712).